A 741-amino-acid polypeptide reads, in one-letter code: Protein O-mannosyl-transferase TMTC4 (741 aa).

The Cytoplasmic portion of the chain corresponds to 1–14 (MAVLDTDLDHILPS). A helical transmembrane segment spans residues 15 to 35 (SVLPPFWAKLVVGSVAIVCFA). Residues 36–111 (RSYDGDFVFD…FHPVGFHVVN (76 aa)) are Extracellular-facing. A glycan (N-linked (GlcNAc...) asparagine) is linked at N78. Residues 112–132 (ILLHSGISVLMVDVFSVLFGG) form a helical membrane-spanning segment. Over 133–141 (LQYTSKGRR) the chain is Cytoplasmic. A helical membrane pass occupies residues 142–162 (LHLAPRASLLAALLFAVHPVH). The Extracellular segment spans residues 163–165 (TEC). The chain crosses the membrane as a helical span at residues 166–186 (VAGVVGRADLLCALFFLLSFL). Topologically, residues 187–198 (GYCKAFRESNKE) are cytoplasmic. A helical membrane pass occupies residues 199–219 (GAHSSTFWVLLSIFLGAVAML). At 220–224 (CKEQG) the chain is on the extracellular side. A helical transmembrane segment spans residues 225–245 (ITVLGLNAVFDILVIGKFNVL). Residues 246 to 268 (EIVQKVLHKDKSLENLGMLRNGG) are Cytoplasmic-facing. Residues 269–288 (LLFRMTLLTSGGAGMLYVRW) traverse the membrane as a helical segment. Residues 289–354 (RIMGTGPPAF…PLIKSISDWR (66 aa)) are Extracellular-facing. A helical membrane pass occupies residues 355 to 375 (VIALAALWFCLIGLICQALCS). The Cytoplasmic portion of the chain corresponds to 376-382 (EDGHKRR). The helical transmembrane segment at 383 to 403 (ILTLGLGFLVIPFLPASNLFF) threads the bilayer. Topologically, residues 404–412 (RVGFVVAER) are extracellular. The helical transmembrane segment at 413-433 (VLYLPSVGYCVLLTFGFGALS) threads the bilayer. Topologically, residues 434 to 440 (KHTKKKK) are cytoplasmic. Residues 441-461 (LIAAVVLGILFINTLRCVLRS) form a helical membrane-spanning segment. Over 462–741 (GEWRSEEQLF…KLELMQKKAV (280 aa)) the chain is Extracellular. TPR repeat units follow at residues 482-515 (AKVH…NPKY), 516-549 (VHAM…QPDF), 550-583 (AAAW…RRKY), 584-617 (PDCY…KPEH), 618-651 (SLAW…IPND), 652-685 (HSLM…NPNA), and 686-719 (ASYH…DPTA). An N-linked (GlcNAc...) asparagine glycan is attached at N497. N609 carries N-linked (GlcNAc...) asparagine glycosylation.

Belongs to the TMTC family.

It is found in the membrane. The protein localises to the endoplasmic reticulum. It catalyses the reaction a di-trans,poly-cis-dolichyl beta-D-mannosyl phosphate + L-seryl-[protein] = 3-O-(alpha-D-mannosyl)-L-seryl-[protein] + a di-trans,poly-cis-dolichyl phosphate + H(+). The enzyme catalyses a di-trans,poly-cis-dolichyl beta-D-mannosyl phosphate + L-threonyl-[protein] = 3-O-(alpha-D-mannosyl)-L-threonyl-[protein] + a di-trans,poly-cis-dolichyl phosphate + H(+). Its pathway is protein modification; protein glycosylation. Its function is as follows. Transfers mannosyl residues to the hydroxyl group of serine or threonine residues. The 4 members of the TMTC family are O-mannosyl-transferases dedicated primarily to the cadherin superfamily, each member seems to have a distinct role in decorating the cadherin domains with O-linked mannose glycans at specific regions. Also acts as O-mannosyl-transferase on other proteins such as PDIA3. This Homo sapiens (Human) protein is Protein O-mannosyl-transferase TMTC4.